We begin with the raw amino-acid sequence, 903 residues long: Zinc finger CCCH domain-containing protein 27 (903 aa).

The segment at 1 to 144 (MIKESSSPAL…GRNGAPWAQH (144 aa)) is disordered. Basic and acidic residues predominate over residues 11–24 (DADKIEVPSPKDEN). Residues 33–46 (TDNEDFEISDDDDD) are compositionally biased toward acidic residues. Basic and acidic residues predominate over residues 86 to 96 (SHGEAQKDFFP). A C3H1-type zinc finger spans residues 225-253 (GMPRQRCRDFEERGFCLRGDMCPMEHGLN). A disordered region spans residues 390-456 (ASKKLGHGKT…GRQSNRASHK (67 aa)). Low complexity predominate over residues 397-410 (GKTANATSTSATGN). The segment covering 432–441 (KDSNGQSNSR) has biased composition (polar residues). An RRM domain is found at 459 to 531 (RTLYVNGIPL…RFIKLWWANR (73 aa)). Disordered regions lie at residues 545–609 (KSSH…DTKR), 642–720 (KQKG…QTSP), and 826–903 (TNHS…DVSQ). The segment covering 556 to 576 (SVPQPSSSNRGKENLQSATPR) has biased composition (polar residues). Residues 577 to 587 (ASSGSSAEASG) show a composition bias toward low complexity. A coiled-coil region spans residues 608-649 (KRQESLELLEELRKKQEILAQKRDEFRRQLEKLAKQKGLANS). A compositionally biased stretch (low complexity) spans 693–708 (SGELASSSHKSSATSA). A compositionally biased stretch (polar residues) spans 826 to 886 (TNHSRFQKTS…SMPTATSAKT (61 aa)).

The protein is Zinc finger CCCH domain-containing protein 27 of Oryza sativa subsp. japonica (Rice).